A 152-amino-acid chain; its full sequence is Ribosome maturation factor RimP (152 aa).

The protein belongs to the RimP family.

Its subcellular location is the cytoplasm. Required for maturation of 30S ribosomal subunits. In Clostridium beijerinckii (strain ATCC 51743 / NCIMB 8052) (Clostridium acetobutylicum), this protein is Ribosome maturation factor RimP.